Here is a 395-residue protein sequence, read N- to C-terminus: Flap endonuclease 1 (395 aa).

The segment at 1–108 (MGILGLSKLL…DELEMRRQKA (108 aa)) is N-domain. Aspartate 34 is a Mg(2+) binding site. Arginine 74 provides a ligand contact to DNA. Residues aspartate 90, glutamate 162, glutamate 164, aspartate 183, and aspartate 185 each contribute to the Mg(2+) site. The interval 126 to 257 (MMEKMSKRTV…QKAWEGIQRY (132 aa)) is I-domain. Residue glutamate 162 coordinates DNA. 2 residues coordinate DNA: glycine 235 and aspartate 237. Aspartate 237 serves as a coordination point for Mg(2+). The interaction with PCNA stretch occupies residues 340–348 (TQGRLDSFF).

It belongs to the XPG/RAD2 endonuclease family. FEN1 subfamily. Interacts with PCNA. Three molecules of FEN1 bind to one PCNA trimer with each molecule binding to one PCNA monomer. PCNA stimulates the nuclease activity without altering cleavage specificity. It depends on Mg(2+) as a cofactor. Phosphorylated. Phosphorylation upon DNA damage induces relocalization to the nuclear plasma.

It localises to the nucleus. It is found in the nucleolus. The protein resides in the nucleoplasm. The protein localises to the mitochondrion. Functionally, structure-specific nuclease with 5'-flap endonuclease and 5'-3' exonuclease activities involved in DNA replication and repair. During DNA replication, cleaves the 5'-overhanging flap structure that is generated by displacement synthesis when DNA polymerase encounters the 5'-end of a downstream Okazaki fragment. It enters the flap from the 5'-end and then tracks to cleave the flap base, leaving a nick for ligation. Also involved in the long patch base excision repair (LP-BER) pathway, by cleaving within the apurinic/apyrimidinic (AP) site-terminated flap. Acts as a genome stabilization factor that prevents flaps from equilibrating into structures that lead to duplications and deletions. Also possesses 5'-3' exonuclease activity on nicked or gapped double-stranded DNA, and exhibits RNase H activity. Also involved in replication and repair of rDNA and in repairing mitochondrial DNA. The polypeptide is Flap endonuclease 1 (Leishmania infantum).